Consider the following 181-residue polypeptide: Large ribosomal subunit protein uL6 (181 aa).

The protein belongs to the universal ribosomal protein uL6 family. Part of the 50S ribosomal subunit.

Functionally, this protein binds to the 23S rRNA, and is important in its secondary structure. It is located near the subunit interface in the base of the L7/L12 stalk, and near the tRNA binding site of the peptidyltransferase center. This chain is Large ribosomal subunit protein uL6, found in Coprothermobacter proteolyticus (strain ATCC 35245 / DSM 5265 / OCM 4 / BT).